A 427-amino-acid chain; its full sequence is Peptidase B (427 aa).

Residues lysine 195 and aspartate 200 each contribute to the Mn(2+) site. Residue lysine 207 is part of the active site. Aspartate 218, aspartate 277, and glutamate 279 together coordinate Mn(2+). Residue arginine 281 is part of the active site.

The protein belongs to the peptidase M17 family. Homohexamer. It depends on Mn(2+) as a cofactor.

The protein localises to the cytoplasm. The catalysed reaction is Release of an N-terminal amino acid, Xaa, from a peptide or arylamide. Xaa is preferably Glu or Asp but may be other amino acids, including Leu, Met, His, Cys and Gln.. In terms of biological role, probably plays an important role in intracellular peptide degradation. In Escherichia coli O127:H6 (strain E2348/69 / EPEC), this protein is Peptidase B.